The primary structure comprises 166 residues: KH homology domain-containing protein 1C (166 aa).

Residues 19 to 78 (PLVFDMEEDKEDYIFGPHDEYLHTLEVHSNTLIQLERWFTPTGQTRVTVVGPLKARLWVM) enclose the KH; atypical domain.

Belongs to the KHDC1 family.

The polypeptide is KH homology domain-containing protein 1C (Khdc1c) (Mus musculus (Mouse)).